The following is a 601-amino-acid chain: Putative ankyrin repeat protein R841 (601 aa).

ANK repeat units lie at residues 17-50 (NNIT…DVNA), 54-86 (HGKS…DVNH), 91-123 (QRSV…NINY), 165-197 (RENI…NIDH), 201-234 (YGQT…NINS), 238-269 (KGWS…EINS), 274-310 (NETM…SIDN), 314-349 (KGYT…NINS), 361-390 (VCCD…DVNS), 397-427 (TILM…NPNI), 432-463 (YHKF…DPNI), and 467-500 (IGNN…SYNC).

This Acanthamoeba polyphaga mimivirus (APMV) protein is Putative ankyrin repeat protein R841.